Here is a 247-residue protein sequence, read N- to C-terminus: 2,3-bisphosphoglycerate-dependent phosphoglycerate mutase (247 aa).

Substrate is bound by residues 8–15 (RHGESQWN), 21–22 (TG), R60, 87–90 (ERHY), K98, 114–115 (RR), and 183–184 (GN). H9 functions as the Tele-phosphohistidine intermediate in the catalytic mechanism. E87 serves as the catalytic Proton donor/acceptor.

This sequence belongs to the phosphoglycerate mutase family. BPG-dependent PGAM subfamily.

The catalysed reaction is (2R)-2-phosphoglycerate = (2R)-3-phosphoglycerate. It functions in the pathway carbohydrate degradation; glycolysis; pyruvate from D-glyceraldehyde 3-phosphate: step 3/5. In terms of biological role, catalyzes the interconversion of 2-phosphoglycerate and 3-phosphoglycerate. The protein is 2,3-bisphosphoglycerate-dependent phosphoglycerate mutase of Chlorobaculum tepidum (strain ATCC 49652 / DSM 12025 / NBRC 103806 / TLS) (Chlorobium tepidum).